The sequence spans 480 residues: MALSQGTKKKVCYYYDGDVGNYYYGQGHPMKPHRIRMTHNLLLNYGLYRKMEIYRPHKASAEEMTKYHSDDYIKFLRSIRPDNMSEYSKQMQRFNVGEDCPVFDGLFEFCQLSTGGSVASAVKLNKQQTDISVNWSGGLHHAKKSEASGFCYVNDIVLAILELLKYHQRVVYIDIDIHHGDGVEEAFYTTDRVMSVSFHKYGEYFPGTGDLRDIGAGKGKYYAVNYPLRDGIDDESYEAIFKPVMTKVMEMFQPSAVVLQCGADSLSGDRLGCFNLTIKGHAKCVEFIKTFNLPMLMLGGGGYTIRNVARCWTYETAVALDSEIPNELPYNDYFEYFGPDFKLHISPSNMTNQNTNEYLEKIKQRLFENLRMLPHAPGVQMQAIPEDSVHDDSGEEDEEDPDKRISIRSSDKRIACDEEFSDSEDEGEGGRKNVANFKKVKRVKTEEEKEGEDKKDVKEEEKAKDEKTDSKRVKEETKSV.

The histone deacetylase stretch occupies residues 10–321 (KVCYYYDGDV…WTYETAVALD (312 aa)). Residue H141 is part of the active site. Positions 387-480 (DSVHDDSGEE…KRVKEETKSV (94 aa)) are disordered. The segment covering 401–416 (PDKRISIRSSDKRIAC) has biased composition (basic and acidic residues). Residues 417–427 (DEEFSDSEDEG) are compositionally biased toward acidic residues. A compositionally biased stretch (basic and acidic residues) spans 443-480 (VKTEEEKEGEDKKDVKEEEKAKDEKTDSKRVKEETKSV).

This sequence belongs to the histone deacetylase family. HD type 1 subfamily. In terms of assembly, found in a large complex with RBBP4 and MI-2.

It localises to the nucleus. The protein localises to the cytoplasm. It catalyses the reaction N(6)-acetyl-L-lysyl-[histone] + H2O = L-lysyl-[histone] + acetate. The enzyme catalyses N(6)-acetyl-L-lysyl-[protein] + H2O = L-lysyl-[protein] + acetate. The catalysed reaction is N(6)-(2E)-butenoyl-L-lysyl-[protein] + H2O = (2E)-2-butenoate + L-lysyl-[protein]. Its function is as follows. Histone deacetylase that catalyzes the deacetylation of lysine residues on the N-terminal part of the core histones (H2A, H2B, H3 and H4). Histone deacetylation gives a tag for epigenetic repression and plays an important role in transcriptional regulation, cell cycle progression and developmental events. Histone deacetylases act via the formation of large multiprotein complexes. Also functions as a deacetylase for non-histone proteins. In addition to protein deacetylase activity, also has protein-lysine deacylase activity: acts as a protein decrotonylase by mediating decrotonylation ((2E)-butenoyl) of histones. The protein is Probable histone deacetylase 1-B (hdac1-b) of Xenopus laevis (African clawed frog).